The sequence spans 237 residues: Urease accessory protein UreF (237 aa).

This sequence belongs to the UreF family. In terms of assembly, ureD, UreF and UreG form a complex that acts as a GTP-hydrolysis-dependent molecular chaperone, activating the urease apoprotein by helping to assemble the nickel containing metallocenter of UreC. The UreE protein probably delivers the nickel.

The protein localises to the cytoplasm. In terms of biological role, required for maturation of urease via the functional incorporation of the urease nickel metallocenter. The polypeptide is Urease accessory protein UreF (Methylibium petroleiphilum (strain ATCC BAA-1232 / LMG 22953 / PM1)).